The sequence spans 670 residues: tRNA 5-methylaminomethyl-2-thiouridine biosynthesis bifunctional protein MnmC (670 aa).

Residues 1-242 (MTFSVQHAEI…KRECLSGLKI (242 aa)) form a tRNA (mnm(5)s(2)U34)-methyltransferase region. The segment at 269–670 (IGGGIASLCA…KKWLKGSKVE (402 aa)) is FAD-dependent cmnm(5)s(2)U34 oxidoreductase.

In the N-terminal section; belongs to the methyltransferase superfamily. tRNA (mnm(5)s(2)U34)-methyltransferase family. The protein in the C-terminal section; belongs to the DAO family. The cofactor is FAD.

It is found in the cytoplasm. The enzyme catalyses 5-aminomethyl-2-thiouridine(34) in tRNA + S-adenosyl-L-methionine = 5-methylaminomethyl-2-thiouridine(34) in tRNA + S-adenosyl-L-homocysteine + H(+). Catalyzes the last two steps in the biosynthesis of 5-methylaminomethyl-2-thiouridine (mnm(5)s(2)U) at the wobble position (U34) in tRNA. Catalyzes the FAD-dependent demodification of cmnm(5)s(2)U34 to nm(5)s(2)U34, followed by the transfer of a methyl group from S-adenosyl-L-methionine to nm(5)s(2)U34, to form mnm(5)s(2)U34. The polypeptide is tRNA 5-methylaminomethyl-2-thiouridine biosynthesis bifunctional protein MnmC (Haemophilus influenzae (strain PittEE)).